The chain runs to 441 residues: Ribosomal protein uS12 methylthiotransferase RimO (441 aa).

Positions proline 8 to proline 118 constitute an MTTase N-terminal domain. [4Fe-4S] cluster is bound by residues cysteine 17, cysteine 53, cysteine 82, cysteine 150, cysteine 154, and cysteine 157. In terms of domain architecture, Radical SAM core spans leucine 136–glutamate 373. Residues glutamine 376–valine 441 enclose the TRAM domain.

Belongs to the methylthiotransferase family. RimO subfamily. Requires [4Fe-4S] cluster as cofactor.

It localises to the cytoplasm. It carries out the reaction L-aspartate(89)-[ribosomal protein uS12]-hydrogen + (sulfur carrier)-SH + AH2 + 2 S-adenosyl-L-methionine = 3-methylsulfanyl-L-aspartate(89)-[ribosomal protein uS12]-hydrogen + (sulfur carrier)-H + 5'-deoxyadenosine + L-methionine + A + S-adenosyl-L-homocysteine + 2 H(+). Its function is as follows. Catalyzes the methylthiolation of an aspartic acid residue of ribosomal protein uS12. In Salmonella arizonae (strain ATCC BAA-731 / CDC346-86 / RSK2980), this protein is Ribosomal protein uS12 methylthiotransferase RimO.